The following is a 94-amino-acid chain: Trp operon repressor homolog (94 aa).

The DNA-binding element occupies 58–81 (QREIAEKYGVSIAQITRGSNALKG).

It belongs to the TrpR family. In terms of assembly, homodimer.

It localises to the cytoplasm. This protein is an aporepressor. When complexed with L-tryptophan it binds the operator region of the trp operon and prevents the initiation of transcription. This is Trp operon repressor homolog from Chlamydia trachomatis serovar L2 (strain ATCC VR-902B / DSM 19102 / 434/Bu).